Reading from the N-terminus, the 869-residue chain is MNSANRKPLPGTKLDYFDARAAVEAIQPGAYDKLPYTSRVLAENLVRRCDPATLTDSLLQLVGRKRDLDFPWFPARVVCHDILGQTALVDLAGLRDAIADQGGDPAKVNPVVPVQLIVDHSLAVECGGFDPDAFAKNRAIEDRRNEDRFHFIDWTKQAFKNVDVIPPGNGIMHQINLEKMSPVIHADNGVAYPDTCVGTDSHTPHVDALGVIAIGVGGLEAENVMLGRASWMRLPDIVGVELTGKRQPGITATDIVLALTEFLRKEKVVGAYLEFRGEGASSLTLGDRATISNMAPEYGATAAMFFIDEQTIDYLRLTGRTDEQLKLVETYARTAGLWADSLKNAEYERVLKFDLSSVVRNMAGPSNPHKRLPTSALAERGIAVDLDKASAQEAEGLMPDGAVIIAAITSCTNTSNPRNVIAAALLARNANARGLARKPWVKSSLAPGSKAVELYLEEANLLPDLEKLGFGIVAFACTTCNGMSGALDPKIQQEIIDRDLYATAVLSGNRNFDGRIHPYAKQAFLASPPLVVAYAIAGTIRFDIEKDVLGTDQDGKPVYLKDIWPSDEEIDAIVAKSVKPEQFRKVYEPMFAITAASGESVSPLYDWRPQSTYIRRPPYWEGALAGERTLKALRPLAVLGDNITTDHLSPSNAIMLNSAAGEYLARMGLPEEDFNSYATHRGDHLTAQRATFANPTLINEMAVVDGQVKKGSLARIEPEGKVVRMWEAIETYMDRKQPLIIIAGADYGQGSSRDWAAKGVRLAGVEVIVAEGFERIHRTNLIGMGVLPLEFKPGVNRLTLGLDGTETYDVIGERQPRATLTLVVNRKNGERVEVPVTCRLDSDEEVSIYEAGGVLHFAQDFLESSRATA.

[4Fe-4S] cluster-binding residues include cysteine 411, cysteine 477, and cysteine 480.

Belongs to the aconitase/IPM isomerase family. In terms of assembly, monomer. It depends on [4Fe-4S] cluster as a cofactor.

The catalysed reaction is citrate = D-threo-isocitrate. It catalyses the reaction (2S,3R)-3-hydroxybutane-1,2,3-tricarboxylate = 2-methyl-cis-aconitate + H2O. Its pathway is carbohydrate metabolism; tricarboxylic acid cycle; isocitrate from oxaloacetate: step 2/2. It functions in the pathway organic acid metabolism; propanoate degradation. Involved in the catabolism of short chain fatty acids (SCFA) via the tricarboxylic acid (TCA)(acetyl degradation route) and the 2-methylcitrate cycle I (propionate degradation route). Catalyzes the reversible isomerization of citrate to isocitrate via cis-aconitate. Could catalyze the hydration of 2-methyl-cis-aconitate to yield (2S,3R)-2-methylisocitrate. The apo form of AcnA functions as a RNA-binding regulatory protein. The polypeptide is Aconitate hydratase A (Cupriavidus necator (Alcaligenes eutrophus)).